The following is a 559-amino-acid chain: MSKVPSDIEIAQAAKMKPVMELARGLGIQEDEVELYGKYKAKISLDVYRRLKDKPDGKLILVTAITPTPAGEGKTTTSVGLTDALARLGKRVMVCLREPSLGPSFGIKGGAAGGGYAQVVPMEDINLHFTGDIHAVTYAHNLLAAMVDNHLQQGNVLNIDPRTITWRRVIDLNDRALRNIVIGLGGKANGVPRETGFDISVASEVMACLCLASDLMDLKERFSRIVVGYTYDGKPVTAGDLEAQGSMALLMKDAIKPNLVQTLENTPAFIHGGPFANIAHGCNSIIATKTALKLADYVVTEAGFGADLGAEKFYDVKCRYAGFKPDATVIVATVRALKMHGGVPKSDLATENLEALREGFANLEKHIENIGKFGVPAVVAINAFPTDTEAELNLLYELCAKAGAEVALSEVWAKGGEGGLELARKVLQTLESRPSNFHVLYNLDLSIKDKIAKIATEIYGADGVNYTAEADKAIQRYESLGYGNLPVVMAKTQYSFSDDMTKLGRPRNFTITVREVRLSAGGRLIVPITGAIMTMPGLPKRPAACNIDIDADGVITGLF.

68 to 75 (TPAGEGKT) provides a ligand contact to ATP.

The protein belongs to the formate--tetrahydrofolate ligase family. Homotetramer.

The enzyme catalyses (6S)-5,6,7,8-tetrahydrofolate + formate + ATP = (6R)-10-formyltetrahydrofolate + ADP + phosphate. The protein operates within one-carbon metabolism; tetrahydrofolate interconversion. This Moorella thermoacetica (Clostridium thermoaceticum) protein is Formate--tetrahydrofolate ligase.